The sequence spans 636 residues: Putative cysteine-rich receptor-like protein kinase 33 (636 aa).

A signal peptide spans 1 to 25; sequence MRKTKKISFLIFWVVLISIIGAISS. 2 consecutive Gnk2-homologous domains span residues 26–128 and 138–245; these read QQCN…NSSF and YMEH…LYPF. The Extracellular portion of the chain corresponds to 26 to 266; it reads QQCNETGYFE…PGSKRNISVG (241 aa). 10 N-linked (GlcNAc...) asparagine glycosylation sites follow: Asn29, Asn63, Asn105, Asn125, Asn149, Asn173, Asn185, Asn188, Asn250, and Asn262. A helical membrane pass occupies residues 267-287; sequence FFVAIVVATGVVISVLSTLVV. The Cytoplasmic segment spans residues 288–636; sequence VLVCRKRKTD…DSLIDDLVPR (349 aa). The Protein kinase domain occupies 321 to 600; it reads FSKCNMLGQG…MMLTSNSITL (280 aa). ATP-binding positions include 327–335 and Lys349; that span reads LGQGGFGEV. Residue Tyr394 is modified to Phosphotyrosine. The active-site Proton acceptor is the Asp446. Ser450 is modified (phosphoserine). Thr486 carries the phosphothreonine modification. Residue Tyr494 is modified to Phosphotyrosine.

This sequence belongs to the protein kinase superfamily. Ser/Thr protein kinase family. CRK subfamily.

Its subcellular location is the membrane. The enzyme catalyses L-seryl-[protein] + ATP = O-phospho-L-seryl-[protein] + ADP + H(+). It catalyses the reaction L-threonyl-[protein] + ATP = O-phospho-L-threonyl-[protein] + ADP + H(+). This Arabidopsis thaliana (Mouse-ear cress) protein is Putative cysteine-rich receptor-like protein kinase 33 (CRK33).